The chain runs to 383 residues: Probable lipid transporter atnI (383 aa).

The next 2 membrane-spanning stretches (helical) occupy residues 46–66 (VLFSVLFGLTTIIHIVQAIMF) and 71–91 (AWVVIMSSLWELIAFIMRSLF). Asparagine 94 is a glycosylation site (N-linked (GlcNAc...) asparagine). The next 5 helical transmembrane spans lie at 104-124 (FTIFFLLAPIWVNAFLYMTLG), 144-164 (FGHIFVWLEILAFIIQLVGAA), 182-202 (IYMGGIGVQELFILIFTGLFI), 231-251 (WLFYAIYASLFLITVRIIFRL), and 269-289 (WFEYVWDAAPIFICLAILNVA). The segment at 305–383 (VSRKEKKQRK…YDNRGNEVRP (79 aa)) is disordered. Positions 307–316 (RKEKKQRKRE) are enriched in basic residues. A compositionally biased stretch (basic and acidic residues) spans 317–329 (KKEAKIAEKEAKK).

The protein belongs to the lipid-translocating exporter (LTE) (TC 9.A.26.1) family.

The protein localises to the membrane. The protein operates within secondary metabolite biosynthesis. Its function is as follows. Probable lipid transporter; part of the gene cluster that mediates the biosynthesis of aspercryptins, linear lipopeptides built from six amino acids including 2 highly unusual and nonproteogenic amino acids, 2-amino-octanoic acid (2aoa) and 2-amino-dodecanol (2adol). The core structure of aspercryptins is as follows: Ser/Ala-Thr-Ile/Val-2aoa-Asn-2adol. The first step of aspercryptin biosynthesis is the generation of the fatty acid precursors, octanoic and dodecanoic acids, by the FAS subunits atnF and atnM. The fatty acid precursors are likely transformed into the corresponding alpha-amino fatty acids in three steps. First, they are hydroxylated by the cytochrome P450 monooxygenase atnE, then oxidized to the corresponding alpha-keto acids by the NAD(P)-dependent oxidoreductase atnD, and finally converted to the alpha-amino fatty acids by the PLP-dependent aminotransferases atnH or atnJ. the alpha-amino fatty acids, 2-amino-octanoic and 2-amino-dodecanoic acids, are recognized, activated, and covalently tethered to the NRPS atnA by its fourth and sixth adenylation domains. The second module of atnA is the Thr module and contains an epimerase (E) domain responsible for the epimerization of Thr to D-allo-Thr. Additionally, despite atnA having only one epimerase domain, the first amino acid of aspercryptin A1 is D-Ser, suggesting that serine is either loaded directly as D-Ser on the first module or that the epimerase domain in the threonine module epimerizes both L-Ser and L-Thr. After condensation of the hexapeptide of aspercryptin, the C-terminal reductase (TE) domain might be involved in the reductive release and production of the aldehyde hexapeptide. Further reduction would generate aspercryptins. The variety of aspercryptins produced reflects the flexibility of the atnA NRPS, allowing incorporation of alanine instead of serine, valine for isoleucine, and a C10 fatty amino alcohol instead of the C12 version. AtnB seems to be involved in the selectivity for Ile versus Val by the third module. Moreover, type B, C and D aspercryptins have an additional N-terminal cichorine, acetyl and propionyl group respectively. This Emericella nidulans (strain FGSC A4 / ATCC 38163 / CBS 112.46 / NRRL 194 / M139) (Aspergillus nidulans) protein is Probable lipid transporter atnI.